A 159-amino-acid polypeptide reads, in one-letter code: 4-deoxy-4-sulfo-D-erythrose isomerase (159 aa).

Cysteine 66 functions as the Proton acceptor in the catalytic mechanism.

This sequence belongs to the LacAB/RpiB family.

It carries out the reaction 4-deoxy-4-sulfo-D-erythrose = 4-deoxy-4-sulfo-D-erythrulose. Its function is as follows. Part of the sulfo-TK pathway, a D-sulfoquinovose degradation pathway that produces 2-hydroxyethane-1-sulfonate (isethionate). Catalyzes the isomerization of 4-deoxy-4-sulfo-D-erythrose (SE) to 4-deoxy-4-sulfo-D-erythrulose (SEu). The polypeptide is 4-deoxy-4-sulfo-D-erythrose isomerase (Clostridium sp. (strain MSTE9)).